Reading from the N-terminus, the 518-residue chain is Uronate isomerase (518 aa).

Belongs to the metallo-dependent hydrolases superfamily. Uronate isomerase family.

It carries out the reaction D-glucuronate = D-fructuronate. It catalyses the reaction aldehydo-D-galacturonate = keto-D-tagaturonate. The protein operates within carbohydrate metabolism; pentose and glucuronate interconversion. The chain is Uronate isomerase (uxaC) from Corynebacterium glutamicum (strain ATCC 13032 / DSM 20300 / JCM 1318 / BCRC 11384 / CCUG 27702 / LMG 3730 / NBRC 12168 / NCIMB 10025 / NRRL B-2784 / 534).